The primary structure comprises 254 residues: Precorrin-3B C(17)-methyltransferase (254 aa).

Belongs to the precorrin methyltransferase family.

It carries out the reaction precorrin-3B + S-adenosyl-L-methionine = precorrin-4 + S-adenosyl-L-homocysteine + 3 H(+). The protein operates within cofactor biosynthesis; adenosylcobalamin biosynthesis; cob(II)yrinate a,c-diamide from precorrin-2 (aerobic route): step 3/10. In terms of biological role, methyltransferase that catalyzes the methylation of C-17 in precorrin-3B to form precorrin-4. This chain is Precorrin-3B C(17)-methyltransferase (cobJ), found in Sinorhizobium sp.